The primary structure comprises 438 residues: MGNTNGDSAFNKRTIAAALANYIDAGSIVAGSAGLSLWVSYLKLSDTQIGLLGALSANAISAAVGALLGGFLADKVGRKAVYTNSMLVYALGICLVLFGVNFPMLLSGYIIIGLSVGADITASWTIIAENAPKKNRARHCGVAQVAWAAGAVVVLLLSVLAGDLGLLGNKIVFAHLLVIALITYILRIRLPESDAWQTKNQPEEAQAEKPAVLNKTSYFDLLKPMYLKSILFLMGVYLVWNLAAGVMGFFMPYIYQQVGGVSANMANLLQMGLFIFTGLGVALIFMPFADKYRKTVFGIAAFMAVIGWTLFLLPVEGLPILLLFIVVIGINNGAGQQANYQLWASEIFPTQYRASAQGLMFFLVRISIGIWSLFVPMIITNFGIGTMAAILLGCVTASMIIGLLFAPNTSGKSLEQIQEELYGSPQSQVKKGTESKIM.

12 helical membrane-spanning segments follow: residues 15-35 (IAAA…SAGL), 49-69 (IGLL…ALLG), 86-106 (MLVY…PMLL), 108-128 (GYII…TIIA), 147-167 (WAAG…LGLL), 171-191 (IVFA…IRLP), 230-250 (ILFL…MGFF), 268-288 (LLQM…FMPF), 295-312 (TVFG…TLFL), 317-334 (GLPI…NNGA), 359-379 (LMFF…PMII), and 387-407 (MAAI…LFAP).

The protein belongs to the major facilitator superfamily. Sugar transporter (TC 2.A.1.1) family.

It localises to the cell membrane. Its pathway is polyol metabolism; myo-inositol degradation into acetyl-CoA. Functionally, minor myo-inositol uptake transporter. This Bacillus subtilis (strain 168) protein is Minor myo-inositol transporter IolF (iolF).